A 240-amino-acid chain; its full sequence is PF03932 family protein CutC (240 aa).

This sequence belongs to the CutC family.

It is found in the cytoplasm. This is PF03932 family protein CutC from Xanthomonas campestris pv. campestris (strain 8004).